The sequence spans 161 residues: SsrA-binding protein (161 aa).

Belongs to the SmpB family.

Its subcellular location is the cytoplasm. Functionally, required for rescue of stalled ribosomes mediated by trans-translation. Binds to transfer-messenger RNA (tmRNA), required for stable association of tmRNA with ribosomes. tmRNA and SmpB together mimic tRNA shape, replacing the anticodon stem-loop with SmpB. tmRNA is encoded by the ssrA gene; the 2 termini fold to resemble tRNA(Ala) and it encodes a 'tag peptide', a short internal open reading frame. During trans-translation Ala-aminoacylated tmRNA acts like a tRNA, entering the A-site of stalled ribosomes, displacing the stalled mRNA. The ribosome then switches to translate the ORF on the tmRNA; the nascent peptide is terminated with the 'tag peptide' encoded by the tmRNA and targeted for degradation. The ribosome is freed to recommence translation, which seems to be the essential function of trans-translation. This Psychromonas ingrahamii (strain DSM 17664 / CCUG 51855 / 37) protein is SsrA-binding protein.